A 194-amino-acid polypeptide reads, in one-letter code: MLQPKQTSWVILAGGQARRMGGKDKGFVLFQDKALIEHALDTLTSQTDQIAINANRSIEEYSRYAVTFPDQFSEYPGPLAGMHSGLVNMNSDWVGFIPCDSPNLPNNLVSLLCNAVKEDTDIVVAHDGEYMQPVVTLMHKRIIPKIDAFLTRGDRKIILLYKECNTVFADFSDYPNAFINLNSPQELEQFGTLL.

GTP is bound by residues 12-14 (LAG), Lys25, Asn53, Asp70, and Asp100. Asp100 is a binding site for Mg(2+).

This sequence belongs to the MobA family. In terms of assembly, monomer. Mg(2+) is required as a cofactor.

The protein localises to the cytoplasm. It carries out the reaction Mo-molybdopterin + GTP + H(+) = Mo-molybdopterin guanine dinucleotide + diphosphate. Transfers a GMP moiety from GTP to Mo-molybdopterin (Mo-MPT) cofactor (Moco or molybdenum cofactor) to form Mo-molybdopterin guanine dinucleotide (Mo-MGD) cofactor. The polypeptide is Molybdenum cofactor guanylyltransferase (Aliivibrio fischeri (strain ATCC 700601 / ES114) (Vibrio fischeri)).